The primary structure comprises 103 residues: UPF0145 protein Dred_2155 (103 aa).

The protein belongs to the UPF0145 family.

In Desulforamulus reducens (strain ATCC BAA-1160 / DSM 100696 / MI-1) (Desulfotomaculum reducens), this protein is UPF0145 protein Dred_2155.